Here is a 229-residue protein sequence, read N- to C-terminus: Large ribosomal subunit protein uL1 (229 aa).

It belongs to the universal ribosomal protein uL1 family. Part of the 50S ribosomal subunit.

In terms of biological role, binds directly to 23S rRNA. The L1 stalk is quite mobile in the ribosome, and is involved in E site tRNA release. Protein L1 is also a translational repressor protein, it controls the translation of the L11 operon by binding to its mRNA. The protein is Large ribosomal subunit protein uL1 of Rhodopseudomonas palustris (strain BisB5).